The chain runs to 122 residues: Large ribosomal subunit protein uL18 (122 aa).

This sequence belongs to the universal ribosomal protein uL18 family. Part of the 50S ribosomal subunit; part of the 5S rRNA/L5/L18/L25 subcomplex. Contacts the 5S and 23S rRNAs.

Its function is as follows. This is one of the proteins that bind and probably mediate the attachment of the 5S RNA into the large ribosomal subunit, where it forms part of the central protuberance. The chain is Large ribosomal subunit protein uL18 from Desulfatibacillum aliphaticivorans.